Reading from the N-terminus, the 228-residue chain is Cytidylate kinase (228 aa).

11–19 contributes to the ATP binding site; that stretch reads GPAGTGKSS.

The protein belongs to the cytidylate kinase family. Type 1 subfamily.

It localises to the cytoplasm. It carries out the reaction CMP + ATP = CDP + ADP. The catalysed reaction is dCMP + ATP = dCDP + ADP. This is Cytidylate kinase from Mycolicibacterium paratuberculosis (strain ATCC BAA-968 / K-10) (Mycobacterium paratuberculosis).